The sequence spans 256 residues: Acetyl-coenzyme A carboxylase carboxyl transferase subunit alpha (256 aa).

Residues 1–236 (MTDVARILKE…KEHLKTEINQ (236 aa)) enclose the CoA carboxyltransferase C-terminal domain.

Belongs to the AccA family. Acetyl-CoA carboxylase is a heterohexamer composed of biotin carboxyl carrier protein (AccB), biotin carboxylase (AccC) and two subunits each of ACCase subunit alpha (AccA) and ACCase subunit beta (AccD).

Its subcellular location is the cytoplasm. It carries out the reaction N(6)-carboxybiotinyl-L-lysyl-[protein] + acetyl-CoA = N(6)-biotinyl-L-lysyl-[protein] + malonyl-CoA. It functions in the pathway lipid metabolism; malonyl-CoA biosynthesis; malonyl-CoA from acetyl-CoA: step 1/1. Its function is as follows. Component of the acetyl coenzyme A carboxylase (ACC) complex. First, biotin carboxylase catalyzes the carboxylation of biotin on its carrier protein (BCCP) and then the CO(2) group is transferred by the carboxyltransferase to acetyl-CoA to form malonyl-CoA. This Streptococcus uberis (strain ATCC BAA-854 / 0140J) protein is Acetyl-coenzyme A carboxylase carboxyl transferase subunit alpha.